The chain runs to 244 residues: Ribonuclease 3 (244 aa).

The RNase III domain maps to 17 to 146 (FEKKMQELNL…FVGALYLDQG (130 aa)). Residue E59 participates in Mg(2+) binding. D63 is an active-site residue. Mg(2+) contacts are provided by D132 and E135. E135 is a catalytic residue. One can recognise a DRBM domain in the interval 172-241 (DFKTQFQEYV…AERAYKILKN (70 aa)).

The protein belongs to the ribonuclease III family. In terms of assembly, homodimer. The cofactor is Mg(2+).

It localises to the cytoplasm. The catalysed reaction is Endonucleolytic cleavage to 5'-phosphomonoester.. In terms of biological role, digests double-stranded RNA. Involved in the processing of primary rRNA transcript to yield the immediate precursors to the large and small rRNAs (23S and 16S). Processes some mRNAs, and tRNAs when they are encoded in the rRNA operon. Processes pre-crRNA and tracrRNA of type II CRISPR loci if present in the organism. The chain is Ribonuclease 3 from Staphylococcus saprophyticus subsp. saprophyticus (strain ATCC 15305 / DSM 20229 / NCIMB 8711 / NCTC 7292 / S-41).